We begin with the raw amino-acid sequence, 246 residues long: NAD-dependent protein deacetylase (246 aa).

Positions 1–246 (MKKPDIQQLK…VIEEIVNSNS (246 aa)) constitute a Deacetylase sirtuin-type domain. NAD(+) is bound by residues Ala25, Phe36, Arg37, Gln106, Ile108, Asp109, and His124. A nicotinamide-binding site is contributed by Phe36. Residues Ile108 and Asp109 each contribute to the nicotinamide site. The active-site Proton acceptor is His124. Residues Cys132, Cys135, Cys152, and Cys155 each contribute to the Zn(2+) site. Ser193, Ser194, Asn216, and Asp233 together coordinate NAD(+).

Belongs to the sirtuin family. Class U subfamily. The cofactor is Zn(2+).

The protein localises to the cytoplasm. The enzyme catalyses N(6)-acetyl-L-lysyl-[protein] + NAD(+) + H2O = 2''-O-acetyl-ADP-D-ribose + nicotinamide + L-lysyl-[protein]. Its function is as follows. NAD-dependent protein deacetylase which modulates the activities of several enzymes which are inactive in their acetylated form. This is NAD-dependent protein deacetylase from Staphylococcus epidermidis (strain ATCC 12228 / FDA PCI 1200).